The following is a 369-amino-acid chain: Flagellar P-ring protein (369 aa).

A signal peptide spans 1–23 (MRIASFFTVLLTLLTLNIAPASA).

The protein belongs to the FlgI family. In terms of assembly, the basal body constitutes a major portion of the flagellar organelle and consists of four rings (L,P,S, and M) mounted on a central rod.

Its subcellular location is the periplasm. The protein localises to the bacterial flagellum basal body. In terms of biological role, assembles around the rod to form the L-ring and probably protects the motor/basal body from shearing forces during rotation. The sequence is that of Flagellar P-ring protein from Pectobacterium carotovorum subsp. carotovorum (strain PC1).